A 391-amino-acid polypeptide reads, in one-letter code: RAB6A-GEF complex partner protein 2 (391 aa).

The protein belongs to the RGP1 family. As to quaternary structure, forms a complex with RIC1; the interaction enhances RAB6A GTPase activity. Interacts with RIC1. Interacts with RAB6A; the interaction is direct with a preference for RAB6A-GDP. Interacts with RAB33B.

The protein resides in the cytoplasm. It is found in the cytosol. The protein localises to the membrane. Functionally, the RIC1-RGP1 complex acts as a guanine nucleotide exchange factor (GEF), which activates RAB6A by exchanging bound GDP for free GTP and may thereby required for efficient fusion of endosome-derived vesicles with the Golgi compartment. The RIC1-RGP1 complex participates in the recycling of mannose-6-phosphate receptors. This is RAB6A-GEF complex partner protein 2 from Homo sapiens (Human).